Reading from the N-terminus, the 537-residue chain is Glutamate--tRNA ligase (537 aa).

The 'HIGH' region signature appears at 9–19 (PSPTGLQHIGG). Zn(2+) is bound by residues C125, C127, C152, and E154. A 'KMSKS' region motif is present at residues 270 to 274 (KLSKR). K273 is a binding site for ATP.

Belongs to the class-I aminoacyl-tRNA synthetase family. Glutamate--tRNA ligase type 1 subfamily. Monomer. It depends on Zn(2+) as a cofactor.

It localises to the cytoplasm. The enzyme catalyses tRNA(Glu) + L-glutamate + ATP = L-glutamyl-tRNA(Glu) + AMP + diphosphate. Functionally, catalyzes the attachment of glutamate to tRNA(Glu) in a two-step reaction: glutamate is first activated by ATP to form Glu-AMP and then transferred to the acceptor end of tRNA(Glu). This chain is Glutamate--tRNA ligase, found in Treponema pallidum (strain Nichols).